The primary structure comprises 371 residues: Queuine tRNA-ribosyltransferase (371 aa).

Aspartate 93 serves as the catalytic Proton acceptor. Residues 93–97 (DSGGF), aspartate 147, glutamine 191, and glycine 218 each bind substrate. Residues 249-255 (GVGTVVD) are RNA binding. Residue aspartate 268 is the Nucleophile of the active site. The RNA binding; important for wobble base 34 recognition stretch occupies residues 273 to 277 (TRNAR). Zn(2+)-binding residues include cysteine 306, cysteine 308, cysteine 311, and histidine 337.

The protein belongs to the queuine tRNA-ribosyltransferase family. In terms of assembly, homodimer. Within each dimer, one monomer is responsible for RNA recognition and catalysis, while the other monomer binds to the replacement base PreQ1. Requires Zn(2+) as cofactor.

The enzyme catalyses 7-aminomethyl-7-carbaguanine + guanosine(34) in tRNA = 7-aminomethyl-7-carbaguanosine(34) in tRNA + guanine. Its pathway is tRNA modification; tRNA-queuosine biosynthesis. Its function is as follows. Catalyzes the base-exchange of a guanine (G) residue with the queuine precursor 7-aminomethyl-7-deazaguanine (PreQ1) at position 34 (anticodon wobble position) in tRNAs with GU(N) anticodons (tRNA-Asp, -Asn, -His and -Tyr). Catalysis occurs through a double-displacement mechanism. The nucleophile active site attacks the C1' of nucleotide 34 to detach the guanine base from the RNA, forming a covalent enzyme-RNA intermediate. The proton acceptor active site deprotonates the incoming PreQ1, allowing a nucleophilic attack on the C1' of the ribose to form the product. After dissociation, two additional enzymatic reactions on the tRNA convert PreQ1 to queuine (Q), resulting in the hypermodified nucleoside queuosine (7-(((4,5-cis-dihydroxy-2-cyclopenten-1-yl)amino)methyl)-7-deazaguanosine). This chain is Queuine tRNA-ribosyltransferase, found in Leptospira biflexa serovar Patoc (strain Patoc 1 / Ames).